The following is a 582-amino-acid chain: PX domain-containing protein kinase-like protein (582 aa).

The 113-residue stretch at 14-126 (LDDTVPLTAA…KFLDPNNYSA (113 aa)) folds into the PX domain. The 394-residue stretch at 88-481 (FIAERQRGLQ…VENSEEQPVK (394 aa)) folds into the Protein kinase domain. The disordered stretch occupies residues 433 to 550 (EQKQIHQHRR…APFLPQPVNG (118 aa)). 2 stretches are compositionally biased toward basic residues: residues 437-448 (IHQHRRLTRAQS) and 457-469 (KRRK…KSKR). Positions 483-514 (SNSNNSAGSGASSPLTSPSSPTPPSTAGLSSA) are enriched in low complexity. Residues 515 to 531 (LPPPPPPPPPPPPPAGP) are compositionally biased toward pro residues. In terms of domain architecture, WH2 spans 548 to 567 (VNGVNRGALLSSIQNFQKGT).

It belongs to the protein kinase superfamily. In terms of tissue distribution, isoform 1 is present in all tissues examined. Isoform 2 is found in all tissues except skeletal muscle and very low levels in spleen. Both isoforms are widely expressed throughout the nervous system however levels of isoform 2 are higher in purified hippocampal and cortical neurons whereas glial cells express more isoform 1 than isoform 2.

It localises to the cytoplasm. The protein localises to the cell membrane. Its function is as follows. Binds to and modulates brain Na,K-ATPase subunits ATP1B1 and ATP1B3 and may thereby participate in the regulation of electrical excitability and synaptic transmission. May not display kinase activity. The protein is PX domain-containing protein kinase-like protein of Mus musculus (Mouse).